We begin with the raw amino-acid sequence, 183 residues long: Small ribosomal subunit protein cS23y (183 aa).

Belongs to the chloroplast-specific ribosomal protein cS23 family. As to quaternary structure, part of the 30S ribosomal subunit.

The protein resides in the plastid. It is found in the chloroplast. Functionally, component of the chloroplast ribosome (chloro-ribosome), a dedicated translation machinery responsible for the synthesis of chloroplast genome-encoded proteins, including proteins of the transcription and translation machinery and components of the photosynthetic apparatus. The chain is Small ribosomal subunit protein cS23y from Arabidopsis thaliana (Mouse-ear cress).